The chain runs to 328 residues: DNA-directed RNA polymerase subunit alpha (328 aa).

Positions 1–234 (MQTAVNEFLT…QQLAVFVDLE (234 aa)) are alpha N-terminal domain (alpha-NTD). The interval 248-328 (IDPILLRPVD…NWPPASLKND (81 aa)) is alpha C-terminal domain (alpha-CTD).

It belongs to the RNA polymerase alpha chain family. Homodimer. The RNAP catalytic core consists of 2 alpha, 1 beta, 1 beta' and 1 omega subunit. When a sigma factor is associated with the core the holoenzyme is formed, which can initiate transcription.

The enzyme catalyses RNA(n) + a ribonucleoside 5'-triphosphate = RNA(n+1) + diphosphate. DNA-dependent RNA polymerase catalyzes the transcription of DNA into RNA using the four ribonucleoside triphosphates as substrates. This is DNA-directed RNA polymerase subunit alpha from Cellvibrio japonicus (strain Ueda107) (Pseudomonas fluorescens subsp. cellulosa).